We begin with the raw amino-acid sequence, 248 residues long: Ribonuclease PH (248 aa).

Residues R86 and 124-126 (GTR) contribute to the phosphate site.

This sequence belongs to the RNase PH family. In terms of assembly, homohexameric ring arranged as a trimer of dimers.

The catalysed reaction is tRNA(n+1) + phosphate = tRNA(n) + a ribonucleoside 5'-diphosphate. Functionally, phosphorolytic 3'-5' exoribonuclease that plays an important role in tRNA 3'-end maturation. Removes nucleotide residues following the 3'-CCA terminus of tRNAs; can also add nucleotides to the ends of RNA molecules by using nucleoside diphosphates as substrates, but this may not be physiologically important. Probably plays a role in initiation of 16S rRNA degradation (leading to ribosome degradation) during starvation. This chain is Ribonuclease PH, found in Clostridium kluyveri (strain NBRC 12016).